Here is a 291-residue protein sequence, read N- to C-terminus: Lys-63-specific deubiquitinase BRCC36 (291 aa).

An N-acetylalanine modification is found at alanine 2. The MPN domain occupies 12–179 (VHLESDAFLV…YTCFQSIQAQ (168 aa)). Zn(2+) contacts are provided by histidine 122, histidine 124, and aspartate 135. A JAMM motif motif is present at residues 122–135 (HSHPHITVWPSHVD). Serine 233 carries the post-translational modification Phosphoserine.

It belongs to the peptidase M67A family. BRCC36 subfamily. Component of the ARISC complex, at least composed of UIMC1/RAP80, ABRAXAS1, BRCC3/BRCC36, BABAM2 and BABAM1/NBA1. Component of the BRCA1-A complex, at least composed of BRCA1, BARD1, UIMC1/RAP80, ABRAXAS1, BRCC3/BRCC36, BABAM2 and BABAM1/NBA1. In the BRCA1-A complex, interacts directly with ABRAXAS1 and BABAM2. Component of the BRISC complex, at least composed of ABRAXAS2, BRCC3/BRCC36, BABAM2 and BABAM1/NBA1. Identified in a complex with SHMT2 and the other subunits of the BRISC complex. In the BRISC complex, interacts directly with ABRAXAS2. Identified in a complex with ABRAXAS2 and NUMA1. The BRISC complex interacts with the CSN complex. Component of the BRCA1/BRCA2 containing complex (BRCC), which also contains BRCA1, BRCA2, BARD1, BABAM2 and RAD51. BRCC is a ubiquitin E3 ligase complex that enhances cellular survival following DNA damage. Interacts with BRCA1. Binds polyubiquitin. Interacts with PWWP2B. Interacts with HDAC1; this interaction is enhanced in the presence of PWWP2B. Zn(2+) is required as a cofactor.

It localises to the nucleus. It is found in the cytoplasm. The protein resides in the cytoskeleton. Its subcellular location is the spindle pole. Its function is as follows. Metalloprotease that specifically cleaves 'Lys-63'-linked polyubiquitin chains. Does not have activity toward 'Lys-48'-linked polyubiquitin chains. Component of the BRCA1-A complex, a complex that specifically recognizes 'Lys-63'-linked ubiquitinated histones H2A and H2AX at DNA lesions sites, leading to target the BRCA1-BARD1 heterodimer to sites of DNA damage at double-strand breaks (DSBs). In the BRCA1-A complex, it specifically removes 'Lys-63'-linked ubiquitin on histones H2A and H2AX, antagonizing the RNF8-dependent ubiquitination at double-strand breaks (DSBs). Catalytic subunit of the BRISC complex, a multiprotein complex that specifically cleaves 'Lys-63'-linked ubiquitin in various substrates. Mediates the specific 'Lys-63'-specific deubiquitination associated with the COP9 signalosome complex (CSN), via the interaction of the BRISC complex with the CSN complex. The BRISC complex is required for normal mitotic spindle assembly and microtubule attachment to kinetochores via its role in deubiquitinating NUMA1. Plays a role in interferon signaling via its role in the deubiquitination of the interferon receptor IFNAR1; deubiquitination increases IFNAR1 activity by enhancing its stability and cell surface expression. Acts as a regulator of the NLRP3 inflammasome by mediating deubiquitination of NLRP3, leading to NLRP3 inflammasome assembly. Down-regulates the response to bacterial lipopolysaccharide (LPS) via its role in IFNAR1 deubiquitination. Deubiquitinates HDAC1 and PWWP2B leading to their stabilization. This chain is Lys-63-specific deubiquitinase BRCC36 (Brcc3), found in Mus musculus (Mouse).